Consider the following 256-residue polypeptide: MIIFPAIDIKDGVCVRLMQGDPDRVTVYGKDPVSVAKRWEGEGAGWLHVVDLDGAFLRRPANRQVVASIVKAVSIPVQVGGGIRNLEAIRDYLDSGVERAIIGTAALRQPEILEQACGLYRSRIALGIDARDGLVAIEGWKETSGTDAVALAKRFEKLDLAAIIYTDIHRDGMQSGVNIEATKRLLESCSIPVIASGGVHTLQDIEDLLPLVPLGLLGVITGKAIYSGTLRFKDALARVREKCGGATPSPNPRRGE.

Residue D8 is the Proton acceptor of the active site. D129 acts as the Proton donor in catalysis.

It belongs to the HisA/HisF family.

Its subcellular location is the cytoplasm. It carries out the reaction 1-(5-phospho-beta-D-ribosyl)-5-[(5-phospho-beta-D-ribosylamino)methylideneamino]imidazole-4-carboxamide = 5-[(5-phospho-1-deoxy-D-ribulos-1-ylimino)methylamino]-1-(5-phospho-beta-D-ribosyl)imidazole-4-carboxamide. It functions in the pathway amino-acid biosynthesis; L-histidine biosynthesis; L-histidine from 5-phospho-alpha-D-ribose 1-diphosphate: step 4/9. In Syntrophobacter fumaroxidans (strain DSM 10017 / MPOB), this protein is 1-(5-phosphoribosyl)-5-[(5-phosphoribosylamino)methylideneamino] imidazole-4-carboxamide isomerase.